The sequence spans 512 residues: Paraspeckle component 1 (512 aa).

Composition is skewed to polar residues over residues Met-1–Ser-29 and Asp-46–Gln-55. The segment at Met-1–Glu-56 is disordered. RRM domains lie at Cys-76–His-148 and Ala-150–Gln-231. Positions Leu-276–Ile-366 form a coiled coil. Residues Gly-451 to Tyr-512 are disordered. Polar residues predominate over residues Gly-464 to Ser-474. The segment covering Gly-488–Phe-502 has biased composition (gly residues).

This sequence belongs to the PSPC family.

It is found in the nucleus speckle. RNA-binding protein required for the formation of nuclear paraspeckles. Binds to poly(A), poly(G) and poly(U) RNA homopolymers. The chain is Paraspeckle component 1 (pspc1) from Danio rerio (Zebrafish).